Reading from the N-terminus, the 186-residue chain is Elongation factor P (186 aa).

The protein belongs to the elongation factor P family.

It is found in the cytoplasm. It participates in protein biosynthesis; polypeptide chain elongation. In terms of biological role, involved in peptide bond synthesis. Stimulates efficient translation and peptide-bond synthesis on native or reconstituted 70S ribosomes in vitro. Probably functions indirectly by altering the affinity of the ribosome for aminoacyl-tRNA, thus increasing their reactivity as acceptors for peptidyl transferase. The sequence is that of Elongation factor P from Brucella canis (strain ATCC 23365 / NCTC 10854 / RM-666).